Here is a 156-residue protein sequence, read N- to C-terminus: Eosinophil cationic-type ribonuclease 3 (156 aa).

The first 25 residues, 1–25 (MGPKLLESRLCLLLLLRLVLMLASC), serve as a signal peptide directing secretion. H38 acts as the Proton acceptor in catalysis. An N-linked (GlcNAc...) asparagine glycan is attached at N41. 4 cysteine pairs are disulfide-bonded: C47–C106, C61–C119, C79–C134, and C86–C94. 62 to 66 (KGLNT) lines the substrate pocket. Residues N89, N96, and N107 are each glycosylated (N-linked (GlcNAc...) asparagine). H151 acts as the Proton donor in catalysis.

This sequence belongs to the pancreatic ribonuclease family.

This Mus musculus (Mouse) protein is Eosinophil cationic-type ribonuclease 3 (Ear3).